The following is a 57-amino-acid chain: U-Asilidin(1)-Mar2a (57 aa).

The first 24 residues, M1 to A24, serve as a signal peptide directing secretion. 3 disulfides stabilise this stretch: C28–C44, C35–C48, and C43–C53.

Belongs to the asilidin-1 family. In terms of tissue distribution, expressed by the venom gland. Exclusively expressed in the venom thoracic glands (and not in body tissues).

It localises to the secreted. Its function is as follows. May act as a neurotoxin. The chain is U-Asilidin(1)-Mar2a from Machimus arthriticus (Breck robberfly).